We begin with the raw amino-acid sequence, 347 residues long: Histone deacetylase 11 (347 aa).

The segment at 14–326 is histone deacetylase; sequence TRWPIVYSPR…LNLFGLGLIG (313 aa). Histidine 143 is a catalytic residue.

This sequence belongs to the histone deacetylase family. As to quaternary structure, interacts with HDAC6. Weakly expressed in most tissues. Strongly expressed in brain, heart, skeletal muscle, kidney and testis.

The protein localises to the nucleus. It catalyses the reaction N(6)-acetyl-L-lysyl-[histone] + H2O = L-lysyl-[histone] + acetate. Functionally, responsible for the deacetylation of lysine residues on the N-terminal part of the core histones (H2A, H2B, H3 and H4). Histone deacetylation gives a tag for epigenetic repression and plays an important role in transcriptional regulation, cell cycle progression and developmental events. Histone deacetylases act via the formation of large multiprotein complexes. The chain is Histone deacetylase 11 (HDAC11) from Homo sapiens (Human).